Consider the following 125-residue polypeptide: Secreted RxLR effector protein RXLR-C13 (125 aa).

Residues 1–23 (MVNSLTFTLVVVCLVRSCDGVAA) form the signal peptide. Positions 43-73 (RVLQETATANDDVKKLSTSTKVDSKLNQEIK) match the RxLR-dEER motif. Asn-85 carries N-linked (GlcNAc...) asparagine glycosylation. The helical transmembrane segment at 106-123 (FFILATILLFPIAAYMVA) threads the bilayer.

This sequence belongs to the RxLR effector family.

The protein localises to the secreted. It is found in the host endoplasmic reticulum membrane. Its function is as follows. Secreted effector that does not suppress pattern-triggered immunity (PTI) in plant host. The sequence is that of Secreted RxLR effector protein RXLR-C13 from Plasmopara halstedii (Downy mildew of sunflower).